The following is a 233-amino-acid chain: Protein Atu3128 (233 aa).

The protein belongs to the glycosyl hydrolase 88 family.

Its function is as follows. Seems to regulate the surface properties of the bacterium in the presence of plant cells or plant cell extracts. Mutations in this protein are responsible for an increased aggregation of the bacteria in the presence of pea root cap cells. In Agrobacterium fabrum (strain C58 / ATCC 33970) (Agrobacterium tumefaciens (strain C58)), this protein is Protein Atu3128.